A 410-amino-acid polypeptide reads, in one-letter code: Tryptophan synthase beta chain (410 aa).

Residue Lys104 is modified to N6-(pyridoxal phosphate)lysine.

The protein belongs to the TrpB family. As to quaternary structure, tetramer of two alpha and two beta chains. It depends on pyridoxal 5'-phosphate as a cofactor.

It catalyses the reaction (1S,2R)-1-C-(indol-3-yl)glycerol 3-phosphate + L-serine = D-glyceraldehyde 3-phosphate + L-tryptophan + H2O. It functions in the pathway amino-acid biosynthesis; L-tryptophan biosynthesis; L-tryptophan from chorismate: step 5/5. Functionally, the beta subunit is responsible for the synthesis of L-tryptophan from indole and L-serine. The chain is Tryptophan synthase beta chain from Thermosynechococcus vestitus (strain NIES-2133 / IAM M-273 / BP-1).